The primary structure comprises 311 residues: p-hydroxybenzoic acid efflux pump subunit AaeA (311 aa).

Residues 11–31 traverse the membrane as a helical segment; that stretch reads IAITLILVLLGIIAIFKAWVF.

It belongs to the membrane fusion protein (MFP) (TC 8.A.1) family.

The protein localises to the cell inner membrane. Its function is as follows. Forms an efflux pump with AaeB. The chain is p-hydroxybenzoic acid efflux pump subunit AaeA from Serratia proteamaculans (strain 568).